The primary structure comprises 290 residues: Lipoyl synthase (290 aa).

[4Fe-4S] cluster-binding residues include Cys32, Cys37, Cys43, Cys58, Cys62, Cys65, and Ser272. One can recognise a Radical SAM core domain in the interval 44 to 261 (WGEGTATFMI…KEVAVSLGFK (218 aa)).

This sequence belongs to the radical SAM superfamily. Lipoyl synthase family. It depends on [4Fe-4S] cluster as a cofactor.

The protein localises to the cytoplasm. It catalyses the reaction [[Fe-S] cluster scaffold protein carrying a second [4Fe-4S](2+) cluster] + N(6)-octanoyl-L-lysyl-[protein] + 2 oxidized [2Fe-2S]-[ferredoxin] + 2 S-adenosyl-L-methionine + 4 H(+) = [[Fe-S] cluster scaffold protein] + N(6)-[(R)-dihydrolipoyl]-L-lysyl-[protein] + 4 Fe(3+) + 2 hydrogen sulfide + 2 5'-deoxyadenosine + 2 L-methionine + 2 reduced [2Fe-2S]-[ferredoxin]. Its pathway is protein modification; protein lipoylation via endogenous pathway; protein N(6)-(lipoyl)lysine from octanoyl-[acyl-carrier-protein]: step 2/2. Its function is as follows. Catalyzes the radical-mediated insertion of two sulfur atoms into the C-6 and C-8 positions of the octanoyl moiety bound to the lipoyl domains of lipoate-dependent enzymes, thereby converting the octanoylated domains into lipoylated derivatives. The chain is Lipoyl synthase from Pyrobaculum aerophilum (strain ATCC 51768 / DSM 7523 / JCM 9630 / CIP 104966 / NBRC 100827 / IM2).